The chain runs to 431 residues: Enolase (431 aa).

Gln167 is a (2R)-2-phosphoglycerate binding site. The Proton donor role is filled by Glu209. Mg(2+)-binding residues include Asp246, Glu289, and Asp316. (2R)-2-phosphoglycerate-binding residues include Lys341, Arg370, Ser371, and Lys392. Lys341 functions as the Proton acceptor in the catalytic mechanism.

This sequence belongs to the enolase family. As to quaternary structure, component of the RNA degradosome, a multiprotein complex involved in RNA processing and mRNA degradation. Mg(2+) is required as a cofactor.

The protein localises to the cytoplasm. It localises to the secreted. The protein resides in the cell surface. It catalyses the reaction (2R)-2-phosphoglycerate = phosphoenolpyruvate + H2O. It participates in carbohydrate degradation; glycolysis; pyruvate from D-glyceraldehyde 3-phosphate: step 4/5. Functionally, catalyzes the reversible conversion of 2-phosphoglycerate (2-PG) into phosphoenolpyruvate (PEP). It is essential for the degradation of carbohydrates via glycolysis. The chain is Enolase from Shewanella halifaxensis (strain HAW-EB4).